The primary structure comprises 520 residues: Ribonuclease Y (520 aa).

Residues 4–24 traverse the membrane as a helical segment; sequence TMFTIISILLSLICLVVGYFV. Positions 210-273 constitute a KH domain; the sequence is TVSVVNLPND…ETARIALDKL (64 aa). The 94-residue stretch at 336–429 folds into the HD domain; that stretch reads VLKHSIEVAH…VAAADALSAA (94 aa).

This sequence belongs to the RNase Y family.

It localises to the cell membrane. In terms of biological role, endoribonuclease that initiates mRNA decay. The sequence is that of Ribonuclease Y from Bacillus pumilus (strain SAFR-032).